A 493-amino-acid chain; its full sequence is Ketol-acid reductoisomerase (NADP(+)) (493 aa).

In terms of domain architecture, KARI N-terminal Rossmann spans 14-208 (LDQLGRCRFM…GGHRAGVLES (195 aa)). NADP(+)-binding positions include 45–48 (CGAQ), Arg-68, Arg-76, Ser-78, and 108–110 (DKQ). The active site involves His-132. Residue Gly-158 participates in NADP(+) binding. KARI C-terminal knotted domains are found at residues 209–345 (SFVA…APKG) and 346–486 (ENIK…MTDM). The Mg(2+) site is built by Asp-217, Glu-221, Glu-390, and Glu-394. Substrate is bound at residue Ser-415.

This sequence belongs to the ketol-acid reductoisomerase family. Mg(2+) is required as a cofactor.

The catalysed reaction is (2R)-2,3-dihydroxy-3-methylbutanoate + NADP(+) = (2S)-2-acetolactate + NADPH + H(+). The enzyme catalyses (2R,3R)-2,3-dihydroxy-3-methylpentanoate + NADP(+) = (S)-2-ethyl-2-hydroxy-3-oxobutanoate + NADPH + H(+). The protein operates within amino-acid biosynthesis; L-isoleucine biosynthesis; L-isoleucine from 2-oxobutanoate: step 2/4. Its pathway is amino-acid biosynthesis; L-valine biosynthesis; L-valine from pyruvate: step 2/4. In terms of biological role, involved in the biosynthesis of branched-chain amino acids (BCAA). Catalyzes an alkyl-migration followed by a ketol-acid reduction of (S)-2-acetolactate (S2AL) to yield (R)-2,3-dihydroxy-isovalerate. In the isomerase reaction, S2AL is rearranged via a Mg-dependent methyl migration to produce 3-hydroxy-3-methyl-2-ketobutyrate (HMKB). In the reductase reaction, this 2-ketoacid undergoes a metal-dependent reduction by NADPH to yield (R)-2,3-dihydroxy-isovalerate. The chain is Ketol-acid reductoisomerase (NADP(+)) from Histophilus somni (strain 129Pt) (Haemophilus somnus).